The primary structure comprises 172 residues: C-phycocyanin-2 beta subunit (172 aa).

Residue asparagine 72 is modified to N4-methylasparagine. (2R,3E)-phycocyanobilin contacts are provided by cysteine 82 and cysteine 153.

The protein belongs to the phycobiliprotein family. Heterodimer of an alpha and a beta subunit, which further assembles into trimers and the trimers into hexamers. In terms of processing, contains two covalently linked bilin chromophores.

The protein resides in the cellular thylakoid membrane. Light-harvesting photosynthetic bile pigment-protein from the phycobiliprotein complex (phycobilisome, PBS). Phycocyanin is the major phycobiliprotein in the PBS rod. This Pseudanabaena tenuis (strain PCC 7409) protein is C-phycocyanin-2 beta subunit (cpcB2).